The sequence spans 468 residues: Charged multivesicular body protein 7 (468 aa).

Coiled-coil stretches lie at residues 233–303 (EKLL…AETD) and 353–379 (VSDA…MIVD). The interval 428–468 (DVPSGPVVISPQRPTEWKTDQASRSPADGSFSRSVPEPVLQ) is disordered.

This sequence belongs to the SNF7 family.

Its subcellular location is the cytoplasm. The protein resides in the nucleus envelope. Functionally, ESCRT-III-like protein required to recruit the ESCRT-III complex to the nuclear envelope during late anaphase. Together with SPAST, the ESCRT-III complex promotes nuclear envelope sealing and mitotic spindle disassembly during late anaphase. Plays a role in the endosomal sorting pathway. The protein is Charged multivesicular body protein 7 (chmp7) of Xenopus tropicalis (Western clawed frog).